The following is a 1097-amino-acid chain: Cyclin-T (1097 aa).

Disordered regions lie at residues 319 to 782 (SNIT…SNGI), 804 to 936 (LLKP…SLQA), and 985 to 1097 (AAPV…YNKK). Basic and acidic residues predominate over residues 332–350 (DSRDRDRDRERERERERDP). Low complexity-rich tracts occupy residues 373–390 (SSSV…SSSS), 420–456 (PSSH…GRPS), 467–478 (GMPPVGVGMPPH), and 489–511 (PQQP…SGMS). The span at 580 to 591 (LPYSQSQSYGHM) shows a compositional bias: polar residues. Residues 592–606 (QQQPVPQSQQQQMPP) are compositionally biased toward low complexity. The span at 609–620 (SQHSLQSKNSLF) shows a compositional bias: polar residues. Residues 652–675 (HDYKLNSHPRDKESPKKERLTPTK) are compositionally biased toward basic and acidic residues. Residues 687 to 698 (GSGNSSSGSGSS) show a composition bias toward low complexity. Positions 860 to 870 (GEIKEESSSKS) are enriched in basic and acidic residues. Residues 871–883 (EKKKKKDKHKHKE) show a composition bias toward basic residues. A compositionally biased stretch (basic and acidic residues) spans 884–895 (KDKSKDKTEKEE). A Phosphoserine modification is found at serine 916. Residues 993-1007 (GAGGGGYSSSGGSSS) are compositionally biased toward gly residues. The span at 1016 to 1031 (SDRDRDKESKKNKSQD) shows a compositional bias: basic and acidic residues. A compositionally biased stretch (gly residues) spans 1037-1050 (GAGGGIFNPLGGAG). Residues 1087-1097 (APPPMPVYNKK) show a composition bias toward pro residues.

This sequence belongs to the cyclin family. Cyclin C subfamily. As to quaternary structure, component of the super elongation complex (SEC), at least composed of Ell, Cdk9, cyclin-T (CycT), lilli and ear. Associates with CDK9 to form P-TEFb.

The protein resides in the nucleus. In terms of biological role, regulatory subunit of the cyclin-dependent kinase pair (CDK9/cyclin T) complex, also called positive transcription elongation factor B (P-TEFb), which is proposed to facilitate the transition from abortive to production elongation by phosphorylating the CTD (carboxy-terminal domain) of the large subunit of RNA polymerase II (RNAP II). This chain is Cyclin-T (CycT), found in Drosophila melanogaster (Fruit fly).